A 389-amino-acid polypeptide reads, in one-letter code: Phosphopentomutase (389 aa).

Asp-10, Asp-282, His-287, Asp-323, His-324, and His-335 together coordinate Mn(2+).

The protein belongs to the phosphopentomutase family. It depends on Mn(2+) as a cofactor.

It is found in the cytoplasm. The catalysed reaction is 2-deoxy-alpha-D-ribose 1-phosphate = 2-deoxy-D-ribose 5-phosphate. The enzyme catalyses alpha-D-ribose 1-phosphate = D-ribose 5-phosphate. It functions in the pathway carbohydrate degradation; 2-deoxy-D-ribose 1-phosphate degradation; D-glyceraldehyde 3-phosphate and acetaldehyde from 2-deoxy-alpha-D-ribose 1-phosphate: step 1/2. Its function is as follows. Isomerase that catalyzes the conversion of deoxy-ribose 1-phosphate (dRib-1-P) and ribose 1-phosphate (Rib-1-P) to deoxy-ribose 5-phosphate (dRib-5-P) and ribose 5-phosphate (Rib-5-P), respectively. The protein is Phosphopentomutase of Clostridium kluyveri (strain NBRC 12016).